A 217-amino-acid polypeptide reads, in one-letter code: Somatotropin (217 aa).

A signal peptide spans methionine 1–glycine 26. Residue histidine 46 participates in Zn(2+) binding. Cysteine 79 and cysteine 190 are oxidised to a cystine. Glutamate 199 is a Zn(2+) binding site. Cysteine 207 and cysteine 215 are oxidised to a cystine.

This sequence belongs to the somatotropin/prolactin family.

The protein resides in the secreted. Its function is as follows. Plays an important role in growth control. Its major role in stimulating body growth is to stimulate the liver and other tissues to secrete IGF1. It stimulates both the differentiation and proliferation of myoblasts. It also stimulates amino acid uptake and protein synthesis in muscle and other tissues. In Galago senegalensis (Northern lesser bushbaby), this protein is Somatotropin (GH1).